The primary structure comprises 162 residues: Transcription antitermination protein NusB (162 aa).

Belongs to the NusB family.

Involved in transcription antitermination. Required for transcription of ribosomal RNA (rRNA) genes. Binds specifically to the boxA antiterminator sequence of the ribosomal RNA (rrn) operons. The polypeptide is Transcription antitermination protein NusB (Xanthomonas euvesicatoria pv. vesicatoria (strain 85-10) (Xanthomonas campestris pv. vesicatoria)).